The primary structure comprises 114 residues: Probable non-functional T cell receptor beta variable 5-7 (114 aa).

An N-terminal signal peptide occupies residues 1-21; the sequence is MGPGLLCWVLLCPLGEGPVDA. The Ig-like domain occupies 22 to 114; it reads GVTQSPTHLI…SALYLCASSL (93 aa). Cysteine 42 and cysteine 110 are joined by a disulfide. The N-linked (GlcNAc...) asparagine glycan is linked to asparagine 90.

In terms of assembly, alpha-beta TR is a heterodimer composed of an alpha and beta chain; disulfide-linked. The alpha-beta TR is associated with the transmembrane signaling CD3 coreceptor proteins to form the TR-CD3 (TcR or TCR). The assembly of alpha-beta TR heterodimers with CD3 occurs in the endoplasmic reticulum where a single alpha-beta TR heterodimer associates with one CD3D-CD3E heterodimer, one CD3G-CD3E heterodimer and one CD247 homodimer forming a stable octameric structure. CD3D-CD3E and CD3G-CD3E heterodimers preferentially associate with TR alpha and TR beta chains, respectively. The association of the CD247 homodimer is the last step of TcR assembly in the endoplasmic reticulum and is required for transport to the cell surface.

It is found in the cell membrane. In terms of biological role, probable non-functional open reading frame (ORF) of V region of the variable domain of T cell receptor (TR) beta chain. Non-functional ORF generally cannot participate in the synthesis of a productive T cell receptor (TR) chain due to altered V-(D)-J or switch recombination and/or splicing site (at mRNA level) and/or conserved amino acid change (protein level). Alpha-beta T cell receptors are antigen specific receptors which are essential to the immune response and are present on the cell surface of T lymphocytes. Recognize peptide-major histocompatibility (MH) (pMH) complexes that are displayed by antigen presenting cells (APC), a prerequisite for efficient T cell adaptive immunity against pathogens. Binding of alpha-beta TR to pMH complex initiates TR-CD3 clustering on the cell surface and intracellular activation of LCK that phosphorylates the ITAM motifs of CD3G, CD3D, CD3E and CD247 enabling the recruitment of ZAP70. In turn ZAP70 phosphorylates LAT, which recruits numerous signaling molecules to form the LAT signalosome. The LAT signalosome propagates signal branching to three major signaling pathways, the calcium, the mitogen-activated protein kinase (MAPK) kinase and the nuclear factor NF-kappa-B (NF-kB) pathways, leading to the mobilization of transcription factors that are critical for gene expression and essential for T cell growth and differentiation. The T cell repertoire is generated in the thymus, by V-(D)-J rearrangement. This repertoire is then shaped by intrathymic selection events to generate a peripheral T cell pool of self-MH restricted, non-autoaggressive T cells. Post-thymic interaction of alpha-beta TR with the pMH complexes shapes TR structural and functional avidity. This chain is Probable non-functional T cell receptor beta variable 5-7, found in Homo sapiens (Human).